The chain runs to 466 residues: Purple acid phosphatase 6 (466 aa).

A signal peptide spans 1 to 20 (MKNLVIFAFLFLSITTVING). A glycan (N-linked (GlcNAc...) asparagine) is linked at N88. Fe cation is bound at residue D164. An N-linked (GlcNAc...) asparagine glycan is attached at N172. Residues D192 and Y195 each coordinate Fe cation. A Zn(2+)-binding site is contributed by D192. N229 and H314 together coordinate Zn(2+). N229 provides a ligand contact to substrate. Residue H324 is the Proton donor of the active site. Residue H351 participates in Zn(2+) binding. 351-353 (HVH) lines the substrate pocket. H353 is a binding site for Fe cation. Residues N367 and N424 are each glycosylated (N-linked (GlcNAc...) asparagine).

It belongs to the metallophosphoesterase superfamily. Purple acid phosphatase family. In terms of assembly, homodimer. The cofactor is Fe cation. Requires Zn(2+) as cofactor. Specifically expressed in flowers.

The protein localises to the secreted. The catalysed reaction is a phosphate monoester + H2O = an alcohol + phosphate. The protein is Purple acid phosphatase 6 (PAP6) of Arabidopsis thaliana (Mouse-ear cress).